A 237-amino-acid chain; its full sequence is Germination-specific N-acetylmuramoyl-L-alanine amidase (237 aa).

The signal sequence occupies residues Met-1 to Asn-27. Positions Ile-43–Leu-226 constitute a MurNAc-LAA domain.

It belongs to the N-acetylmuramoyl-L-alanine amidase 3 family.

It localises to the secreted. The enzyme catalyses Hydrolyzes the link between N-acetylmuramoyl residues and L-amino acid residues in certain cell-wall glycopeptides.. Cleaves the peptide side chain from the N-acetylmuramic acid residues in peptidoglycan. This is a step in the formation of muramic delta-lactam residues in spore cortex. This Bacillus subtilis (strain 168) protein is Germination-specific N-acetylmuramoyl-L-alanine amidase (cwlD).